The primary structure comprises 526 residues: Cytochrome P450 monooxygeanse terK (526 aa).

A helical transmembrane segment spans residues 21–43 (NWGQLTGALLFLAACTWIYLPAF). C465 contributes to the heme binding site.

Belongs to the cytochrome P450 family. It depends on heme as a cofactor.

The protein resides in the membrane. It participates in secondary metabolite biosynthesis. Its function is as follows. Cytochrome P450 monooxygeanse; part of the gene cluster that mediates the biosynthesis of terpendoles, indole-diterpene (IDT) mycotoxins including terpendole I, terpendole K, terpendole C, as well as the kinesin Eg5 inhibitor terpendole E. Terpendoles biosynthesis begins with the synthesis of geranylgeranyl diphosphate (GGPP) by a yet unidentified GGPP synthase. Condensation of indole-3-glycerol phosphate with GGPP by the prenyltransferase terC then forms 3-geranylgeranylindole (3-GGI), followed by epoxidation and cyclization of this intermediate (by the FAD-dependent monooxygeanse terM and the terpene cyclase terB) to form paspaline. The cytochrome monooxygenase terQ then hydroxylates paspalline at C-11 to yield terpendole E. The cytochrome monooxygenase terP converts terpendole E to 13-desoxyterpendole I, and terQ converts 13-desoxyterpendole I into terpendole I. TerF and terK are required for conversion of terpendole I to terpendole C which is further converted to terpendole K. This chain is Cytochrome P450 monooxygeanse terK, found in Tolypocladium album (Soil fungus).